Here is a 253-residue protein sequence, read N- to C-terminus: Carboxy-S-adenosyl-L-methionine synthase (253 aa).

S-adenosyl-L-methionine is bound by residues tyrosine 49, 74–76 (GCS), 98–99 (DN), and asparagine 141.

Belongs to the class I-like SAM-binding methyltransferase superfamily. Cx-SAM synthase family.

The catalysed reaction is prephenate + S-adenosyl-L-methionine = carboxy-S-adenosyl-L-methionine + 3-phenylpyruvate + H2O. Catalyzes the conversion of S-adenosyl-L-methionine (SAM) to carboxy-S-adenosyl-L-methionine (Cx-SAM). The chain is Carboxy-S-adenosyl-L-methionine synthase from Trichodesmium erythraeum (strain IMS101).